Reading from the N-terminus, the 311-residue chain is MFVSRELSDASGKSIPPKSGIYDYITLLKPRVMSLVVFTALVGLVVSPVSINPWYGFLAILCIAIGGGGAGVLNMWYDADIDAVMKRTKNRPIPSGKISSRKAFVFGMVLSMLSVLMMGKFINWFAALLLAFTIFFYIVIYTIWLKRRTPQNIVIGGAAGAFPPMIGCAAATGTVNIESFLLFLIIFMWTPPHFWSLSLFSSLDYGAAGIPMMPNVRGERSTKKQILFYTILMTISAAGPFIIDFAGIFYAIFSTILSVIFIYFAYRLWKADTYDATILMAKKTFFFSLFYLAAIFGILLIEFLVWYFIIL.

9 helical membrane-spanning segments follow: residues 32–52, 53–73, 104–124, 125–145, 153–173, 180–200, 224–244, 245–265, and 290–310; these read VMSLVVFTALVGLVVSPVSIN, PWYGFLAILCIAIGGGGAGVL, FVFGMVLSMLSVLMMGKFINW, FAALLLAFTIFFYIVIYTIWL, IVIGGAAGAFPPMIGCAAATG, FLLFLIIFMWTPPHFWSLSLF, KQILFYTILMTISAAGPFIID, FAGIFYAIFSTILSVIFIYFA, and FYLAAIFGILLIEFLVWYFII.

Belongs to the UbiA prenyltransferase family. Protoheme IX farnesyltransferase subfamily.

Its subcellular location is the cell inner membrane. It catalyses the reaction heme b + (2E,6E)-farnesyl diphosphate + H2O = Fe(II)-heme o + diphosphate. It functions in the pathway porphyrin-containing compound metabolism; heme O biosynthesis; heme O from protoheme: step 1/1. Functionally, converts heme B (protoheme IX) to heme O by substitution of the vinyl group on carbon 2 of heme B porphyrin ring with a hydroxyethyl farnesyl side group. The polypeptide is Protoheme IX farnesyltransferase (Bartonella quintana (strain Toulouse) (Rochalimaea quintana)).